Reading from the N-terminus, the 229-residue chain is Large ribosomal subunit protein uL1 (229 aa).

Belongs to the universal ribosomal protein uL1 family. Part of the 50S ribosomal subunit.

Functionally, binds directly to 23S rRNA. The L1 stalk is quite mobile in the ribosome, and is involved in E site tRNA release. Its function is as follows. Protein L1 is also a translational repressor protein, it controls the translation of the L11 operon by binding to its mRNA. This is Large ribosomal subunit protein uL1 from Streptococcus pyogenes serotype M3 (strain SSI-1).